A 314-amino-acid chain; its full sequence is Methionyl-tRNA formyltransferase (314 aa).

113-116 (SILP) contributes to the (6S)-5,6,7,8-tetrahydrofolate binding site.

Belongs to the Fmt family.

The enzyme catalyses L-methionyl-tRNA(fMet) + (6R)-10-formyltetrahydrofolate = N-formyl-L-methionyl-tRNA(fMet) + (6S)-5,6,7,8-tetrahydrofolate + H(+). Attaches a formyl group to the free amino group of methionyl-tRNA(fMet). The formyl group appears to play a dual role in the initiator identity of N-formylmethionyl-tRNA by promoting its recognition by IF2 and preventing the misappropriation of this tRNA by the elongation apparatus. This chain is Methionyl-tRNA formyltransferase, found in Photobacterium profundum (strain SS9).